A 201-amino-acid chain; its full sequence is LexA repressor (201 aa).

Residues 28–48 (LREIGGHLGINGTLGVMKHLD) constitute a DNA-binding region (H-T-H motif). Residues S120 and K157 each act as for autocatalytic cleavage activity in the active site.

The protein belongs to the peptidase S24 family. Homodimer.

It carries out the reaction Hydrolysis of Ala-|-Gly bond in repressor LexA.. In terms of biological role, represses a number of genes involved in the response to DNA damage (SOS response), including recA and lexA. In the presence of single-stranded DNA, RecA interacts with LexA causing an autocatalytic cleavage which disrupts the DNA-binding part of LexA, leading to derepression of the SOS regulon and eventually DNA repair. The protein is LexA repressor of Geotalea uraniireducens (strain Rf4) (Geobacter uraniireducens).